Reading from the N-terminus, the 166-residue chain is Large ribosomal subunit protein uL10 (166 aa).

The protein belongs to the universal ribosomal protein uL10 family. As to quaternary structure, part of the ribosomal stalk of the 50S ribosomal subunit. The N-terminus interacts with L11 and the large rRNA to form the base of the stalk. The C-terminus forms an elongated spine to which L12 dimers bind in a sequential fashion forming a multimeric L10(L12)X complex.

In terms of biological role, forms part of the ribosomal stalk, playing a central role in the interaction of the ribosome with GTP-bound translation factors. This is Large ribosomal subunit protein uL10 from Shewanella baltica (strain OS223).